The following is a 507-amino-acid chain: Pyridoxine 4-oxidase (507 aa).

His448 functions as the Proton acceptor in the catalytic mechanism.

This sequence belongs to the GMC oxidoreductase family. In terms of assembly, monomer. The cofactor is FAD.

The catalysed reaction is pyridoxine + O2 = pyridoxal + H2O2. The protein operates within cofactor degradation; B6 vitamer degradation; pyridoxal from pyridoxine (oxidase route): step 1/1. In Microbacterium luteolum (Aureobacterium luteolum), this protein is Pyridoxine 4-oxidase (pno).